A 237-amino-acid chain; its full sequence is MRPSKRAAQDLRPVTLERNVARYAEGSCLVKFGGTHVLCTASLEDKPPPWLRGQGRGWVTAEYAMLPRATHTRTRRESMSGKPSGRTQEIQRLIGRSLRAVTNLPALGERQITLDCDVLQADGGTRTAAITGAWVALHDCCKWMHGRSIIKEFPLREHVAAVSCGIYQGEAVLDLDYEEDSVAQTDANFVMTGGGALVEVQASAEGAVFSEDELSVLLALAKGGIAQLVNIQKLAIG.

Phosphate contacts are provided by residues Arg86 and 124–126; that span reads GTR.

This sequence belongs to the RNase PH family. As to quaternary structure, homohexameric ring arranged as a trimer of dimers.

The enzyme catalyses tRNA(n+1) + phosphate = tRNA(n) + a ribonucleoside 5'-diphosphate. Phosphorolytic 3'-5' exoribonuclease that plays an important role in tRNA 3'-end maturation. Removes nucleotide residues following the 3'-CCA terminus of tRNAs; can also add nucleotides to the ends of RNA molecules by using nucleoside diphosphates as substrates, but this may not be physiologically important. Probably plays a role in initiation of 16S rRNA degradation (leading to ribosome degradation) during starvation. The polypeptide is Ribonuclease PH (Beijerinckia indica subsp. indica (strain ATCC 9039 / DSM 1715 / NCIMB 8712)).